The chain runs to 467 residues: Glycogen synthase (467 aa).

An ADP-alpha-D-glucose-binding site is contributed by Lys-15.

The protein belongs to the glycosyltransferase 1 family. Bacterial/plant glycogen synthase subfamily.

It catalyses the reaction [(1-&gt;4)-alpha-D-glucosyl](n) + ADP-alpha-D-glucose = [(1-&gt;4)-alpha-D-glucosyl](n+1) + ADP + H(+). Its pathway is glycan biosynthesis; glycogen biosynthesis. In terms of biological role, synthesizes alpha-1,4-glucan chains using ADP-glucose. The polypeptide is Glycogen synthase (Desulfitobacterium hafniense (strain DSM 10664 / DCB-2)).